We begin with the raw amino-acid sequence, 574 residues long: Efflux pump FUB11 (574 aa).

The interval 1–44 (MAIDPQPSSPSLSSETIANDTIGNDNNVNEPSVEPKTQEHQHTV) is disordered. Residues 9–30 (SPSLSSETIANDTIGNDNNVNE) are compositionally biased toward polar residues. N-linked (GlcNAc...) asparagine glycosylation occurs at Asn-19. A run of 11 helical transmembrane segments spans residues 116–136 (VATLGISLYVLGFTFGPLIWA), 148–168 (FFFTFMVATAFSAGAAGAGSI), 176–196 (FLTGSIGSAPLSNAPALIADM), 208–228 (MFSGAPFLGPAIGPIAGGFLG), 235–255 (WLHGLMAAFTGVTWIACTVFI), 318–338 (IYISIIYGTMYMCFAAFPIVF), 348–368 (IGGLAFTGIVIGVILSIISFA), 394–414 (AIMGSLLIPIGLFWFAWTTFA), 419–439 (IVPIIGTVFFAWGLVLVFMAL), 449–469 (IFAASIMAANSALRSLFGAAF), and 484–504 (WASSIPAFLALACVPFPFLFY). The disordered stretch occupies residues 552–574 (HNSHTSATHSHGHRRSLSCTRSV).

Belongs to the major facilitator superfamily. DHA1 family. Polyamines/proton antiporter (TC 2.A.1.2.16) subfamily.

It is found in the cell membrane. Efflux pump involved in export of fusaric acid, a mycotoxin with low to moderate toxicity to animals and humans, but with high phytotoxic properties. Constitutes a self-protecting mechanism of the fungus against critical levels of fusaric acid within the cell. The protein is Efflux pump FUB11 of Gibberella fujikuroi (strain CBS 195.34 / IMI 58289 / NRRL A-6831) (Bakanae and foot rot disease fungus).